Reading from the N-terminus, the 247-residue chain is Putative ankyrin repeat protein RBE_1110 (247 aa).

ANK repeat units lie at residues 105 to 135 and 139 to 171; these read QNKD…CIDY and EGHN…KLIT.

This chain is Putative ankyrin repeat protein RBE_1110, found in Rickettsia bellii (strain RML369-C).